The following is a 502-amino-acid chain: Glycerol kinase (502 aa).

Position 13 (T13) interacts with ADP. 3 residues coordinate ATP: T13, T14, and S15. T13 contacts sn-glycerol 3-phosphate. R17 contributes to the ADP binding site. R83, E84, Y136, and D246 together coordinate sn-glycerol 3-phosphate. Positions 83, 84, 136, 246, and 247 each coordinate glycerol. 2 residues coordinate ADP: T268 and G311. Residues T268, G311, Q315, and G412 each coordinate ATP. 2 residues coordinate ADP: G412 and N416.

It belongs to the FGGY kinase family.

It catalyses the reaction glycerol + ATP = sn-glycerol 3-phosphate + ADP + H(+). The protein operates within polyol metabolism; glycerol degradation via glycerol kinase pathway; sn-glycerol 3-phosphate from glycerol: step 1/1. Its activity is regulated as follows. Inhibited by fructose 1,6-bisphosphate (FBP). In terms of biological role, key enzyme in the regulation of glycerol uptake and metabolism. Catalyzes the phosphorylation of glycerol to yield sn-glycerol 3-phosphate. The chain is Glycerol kinase from Francisella tularensis subsp. mediasiatica (strain FSC147).